A 655-amino-acid chain; its full sequence is WD repeat-containing protein 70 (655 aa).

2 disordered regions span residues 1-24 (MEHSGPSEVTGADTAGPDPQLAVT) and 43-170 (FEQT…PIHR). A compositionally biased stretch (basic and acidic residues) spans 45–78 (QTRRTAVERSRKTLEAREKEEEMNREKELRKQLE). A compositionally biased stretch (low complexity) spans 99-112 (RDTSSSDSDHSSGS). Positions 148-165 (EEGEDDDDDDLEDEGEED) are enriched in acidic residues. WD repeat units follow at residues 181–220 (HGTKTVSALGLDPSGARLVTGGYDYDVKFWDFAGMDASFK), 228–269 (CECH…ECIK), 282–322 (GHTA…KQKS), 331–370 (GKKVIPTTCTYSRDGNLVAAACQNGSIQIWDRNLTVHPKF), 377–416 (APGTDTSCVAFSYDGNVLASRGGDDTLKLWDVRQFNKPLF), 422–467 (PTLF…RVYE), and 470–509 (ITDASVVRCLWHPKLNQIMVGTGNGLAKVYYDPNKSQRGA). Lys-297 is covalently cross-linked (Glycyl lysine isopeptide (Lys-Gly) (interchain with G-Cter in SUMO2)). Lys-453 bears the N6-acetyllysine mark. The segment covering 541–566 (REPRQRSTRKQLEKDRLDPLKSHKPE) has biased composition (basic and acidic residues). Residues 541–582 (REPRQRSTRKQLEKDRLDPLKSHKPEPPVAGPGRGGRVGTHG) are disordered. A compositionally biased stretch (gly residues) spans 572-582 (PGRGGRVGTHG). Residue Thr-580 is modified to Phosphothreonine. Residues Lys-591 and Lys-597 each participate in a glycyl lysine isopeptide (Lys-Gly) (interchain with G-Cter in SUMO2) cross-link. Phosphoserine is present on residues Ser-622 and Ser-639. The disordered stretch occupies residues 632 to 655 (TMFAQVESDDEESKNEPEWKKRKI). A compositionally biased stretch (basic and acidic residues) spans 645–655 (KNEPEWKKRKI).

This sequence belongs to the WD repeat GAD-1 family.

In Rattus norvegicus (Rat), this protein is WD repeat-containing protein 70 (Wdr70).